A 207-amino-acid chain; its full sequence is Lipid A acyltransferase PagP (207 aa).

Residues methionine 1–alanine 24 form the signal peptide. Residues histidine 79, aspartate 122, and serine 123 contribute to the active site.

Belongs to the lipid A palmitoyltransferase family. In terms of assembly, homodimer.

It is found in the cell outer membrane. The catalysed reaction is a lipid A + a 1,2-diacyl-sn-glycero-3-phosphocholine = a hepta-acyl lipid A + a 2-acyl-sn-glycero-3-phosphocholine. It catalyses the reaction a lipid IVA + a 1,2-diacyl-sn-glycero-3-phosphocholine = a lipid IVB + a 2-acyl-sn-glycero-3-phosphocholine. The enzyme catalyses a lipid IIA + a 1,2-diacyl-sn-glycero-3-phosphocholine = a lipid IIB + a 2-acyl-sn-glycero-3-phosphocholine. Transfers a fatty acid residue from the sn-1 position of a phospholipid to the N-linked hydroxyfatty acid chain on the proximal unit of lipid A or its precursors. The sequence is that of Lipid A acyltransferase PagP from Photorhabdus asymbiotica subsp. asymbiotica (strain ATCC 43949 / 3105-77) (Xenorhabdus luminescens (strain 2)).